Reading from the N-terminus, the 227-residue chain is Cytochrome c oxidase subunit 2 (227 aa).

The Mitochondrial intermembrane portion of the chain corresponds to 1–14 (MAYPFQLGLQDATS). Residues 15–45 (PIMEELANFHDHTLMIVFLISSLVLYIISSM) form a helical membrane-spanning segment. Topologically, residues 46–59 (LTTKLTHTSTMDAQ) are mitochondrial matrix. The helical transmembrane segment at 60-87 (EVETIWTILPAVILILIALPSLRILYMM) threads the bilayer. At 88-227 (DEINNPALTV…HFENWSASMI (140 aa)) the chain is on the mitochondrial intermembrane side. Cu cation contacts are provided by histidine 161, cysteine 196, glutamate 198, cysteine 200, histidine 204, and methionine 207. Mg(2+) is bound at residue glutamate 198.

This sequence belongs to the cytochrome c oxidase subunit 2 family. In terms of assembly, component of the cytochrome c oxidase (complex IV, CIV), a multisubunit enzyme composed of 14 subunits. The complex is composed of a catalytic core of 3 subunits MT-CO1, MT-CO2 and MT-CO3, encoded in the mitochondrial DNA, and 11 supernumerary subunits COX4I, COX5A, COX5B, COX6A, COX6B, COX6C, COX7A, COX7B, COX7C, COX8 and NDUFA4, which are encoded in the nuclear genome. The complex exists as a monomer or a dimer and forms supercomplexes (SCs) in the inner mitochondrial membrane with NADH-ubiquinone oxidoreductase (complex I, CI) and ubiquinol-cytochrome c oxidoreductase (cytochrome b-c1 complex, complex III, CIII), resulting in different assemblies (supercomplex SCI(1)III(2)IV(1) and megacomplex MCI(2)III(2)IV(2)). Found in a complex with TMEM177, COA6, COX18, COX20, SCO1 and SCO2. Interacts with TMEM177 in a COX20-dependent manner. Interacts with COX20. Interacts with COX16. Cu cation is required as a cofactor.

The protein localises to the mitochondrion inner membrane. The catalysed reaction is 4 Fe(II)-[cytochrome c] + O2 + 8 H(+)(in) = 4 Fe(III)-[cytochrome c] + 2 H2O + 4 H(+)(out). Its function is as follows. Component of the cytochrome c oxidase, the last enzyme in the mitochondrial electron transport chain which drives oxidative phosphorylation. The respiratory chain contains 3 multisubunit complexes succinate dehydrogenase (complex II, CII), ubiquinol-cytochrome c oxidoreductase (cytochrome b-c1 complex, complex III, CIII) and cytochrome c oxidase (complex IV, CIV), that cooperate to transfer electrons derived from NADH and succinate to molecular oxygen, creating an electrochemical gradient over the inner membrane that drives transmembrane transport and the ATP synthase. Cytochrome c oxidase is the component of the respiratory chain that catalyzes the reduction of oxygen to water. Electrons originating from reduced cytochrome c in the intermembrane space (IMS) are transferred via the dinuclear copper A center (CU(A)) of subunit 2 and heme A of subunit 1 to the active site in subunit 1, a binuclear center (BNC) formed by heme A3 and copper B (CU(B)). The BNC reduces molecular oxygen to 2 water molecules using 4 electrons from cytochrome c in the IMS and 4 protons from the mitochondrial matrix. This chain is Cytochrome c oxidase subunit 2 (MT-CO2), found in Malacomys longipes (Big-eared swamp rat).